Consider the following 183-residue polypeptide: Potassium-transporting ATPase KdpC subunit (183 aa).

A helical membrane pass occupies residues A10–I30.

It belongs to the KdpC family. In terms of assembly, the system is composed of three essential subunits: KdpA, KdpB and KdpC.

It is found in the cell inner membrane. In terms of biological role, part of the high-affinity ATP-driven potassium transport (or Kdp) system, which catalyzes the hydrolysis of ATP coupled with the electrogenic transport of potassium into the cytoplasm. This subunit acts as a catalytic chaperone that increases the ATP-binding affinity of the ATP-hydrolyzing subunit KdpB by the formation of a transient KdpB/KdpC/ATP ternary complex. This Pseudomonas aeruginosa (strain ATCC 15692 / DSM 22644 / CIP 104116 / JCM 14847 / LMG 12228 / 1C / PRS 101 / PAO1) protein is Potassium-transporting ATPase KdpC subunit.